The chain runs to 510 residues: MSKSPVAIIILDGFGKRAETVGNAVAQANKPNFDRYWADFPHGELKAAGLDVGLPEGQMGNSEVGHTNIGAGRIVYQSLTRIDKAIEEGEFQENKALNNAFTHTKENNSDLHLFGLLSDGGVHSHINHLVALLETAKDKGVKNVYIHAFLDGRDVAPQSSLEYLETLQKAMNDLNYGEIATVSGRFYAMDRDKRWERVEKAYKAIVSAEGEKFEDPIELVKASYANDKNDEFVVPAIITKDGKPVATVKDNDAVIFFNFRPDRAIQLSNAFTDKEWDHFDRGANHPKNIKFVTMTLYNPSVDAEVAFEPIEMKNVIGEVLSNEGLSQLRIAETEKYPHVTFFMNGGRNEEFPGENRILINSPKVETYDLQPEMSAYEVTDALVEDIKNDKHDAIILNFANPDMVGHSGMLEPTIKAIEAVDENLGRVVDLILEKGGSAIIFADHGNSETMSTPEGKPHTAHTTVPVPVIVTKKGVKLREGGRLADVAPTMLDLLGVKKPAEMTGESLIQK.

The Mn(2+) site is built by Asp12 and Ser62. Residue Ser62 is the Phosphoserine intermediate of the active site. Residues His123, 153 to 154 (RD), Arg185, Arg191, 260 to 263 (RPDR), and Lys335 each bind substrate. Mn(2+) contacts are provided by Asp402, His406, Asp443, His444, and His461.

The protein belongs to the BPG-independent phosphoglycerate mutase family. Monomer. The cofactor is Mn(2+).

The enzyme catalyses (2R)-2-phosphoglycerate = (2R)-3-phosphoglycerate. The protein operates within carbohydrate degradation; glycolysis; pyruvate from D-glyceraldehyde 3-phosphate: step 3/5. Functionally, catalyzes the interconversion of 2-phosphoglycerate and 3-phosphoglycerate. The protein is 2,3-bisphosphoglycerate-independent phosphoglycerate mutase of Listeria welshimeri serovar 6b (strain ATCC 35897 / DSM 20650 / CCUG 15529 / CIP 8149 / NCTC 11857 / SLCC 5334 / V8).